We begin with the raw amino-acid sequence, 332 residues long: Biotin synthase (332 aa).

Residues 52–282 (FPENEVEFCS…KAELRLCGGR (231 aa)) form the Radical SAM core domain. [4Fe-4S] cluster-binding residues include Cys-70, Cys-74, and Cys-77. [2Fe-2S] cluster contacts are provided by Cys-114, Cys-147, Cys-207, and Arg-277.

This sequence belongs to the radical SAM superfamily. Biotin synthase family. As to quaternary structure, homodimer. [4Fe-4S] cluster is required as a cofactor. [2Fe-2S] cluster serves as cofactor.

It carries out the reaction (4R,5S)-dethiobiotin + (sulfur carrier)-SH + 2 reduced [2Fe-2S]-[ferredoxin] + 2 S-adenosyl-L-methionine = (sulfur carrier)-H + biotin + 2 5'-deoxyadenosine + 2 L-methionine + 2 oxidized [2Fe-2S]-[ferredoxin]. It participates in cofactor biosynthesis; biotin biosynthesis; biotin from 7,8-diaminononanoate: step 2/2. Functionally, catalyzes the conversion of dethiobiotin (DTB) to biotin by the insertion of a sulfur atom into dethiobiotin via a radical-based mechanism. The chain is Biotin synthase from Aquifex aeolicus (strain VF5).